Reading from the N-terminus, the 336-residue chain is Probable allantoicase 2 (336 aa).

It belongs to the allantoicase family.

The enzyme catalyses allantoate + H2O = (S)-ureidoglycolate + urea. The protein operates within nitrogen metabolism; (S)-allantoin degradation; (S)-ureidoglycolate from allantoate (aminidohydrolase route): step 1/1. The chain is Probable allantoicase 2 from Burkholderia pseudomallei (strain K96243).